Consider the following 212-residue polypeptide: Peptidyl-prolyl cis-trans isomerase-like 3 (212 aa).

One can recognise a PPIase cyclophilin-type domain in the interval 1–198 (MSVTLHTTHG…EGEEGGYEAI (198 aa)).

The protein belongs to the cyclophilin-type PPIase family. PPIL3 subfamily.

It catalyses the reaction [protein]-peptidylproline (omega=180) = [protein]-peptidylproline (omega=0). PPIases accelerate the folding of proteins. It catalyzes the cis-trans isomerization of proline imidic peptide bonds in oligopeptides. In Aspergillus fumigatus (strain ATCC MYA-4609 / CBS 101355 / FGSC A1100 / Af293) (Neosartorya fumigata), this protein is Peptidyl-prolyl cis-trans isomerase-like 3 (cyp10).